The sequence spans 600 residues: Glutamine--fructose-6-phosphate aminotransferase [isomerizing] (600 aa).

The active-site Nucleophile; for GATase activity is Cys2. Positions 2-217 (CGIVGYIGTE…DEEIVIVTKD (216 aa)) constitute a Glutamine amidotransferase type-2 domain. 2 SIS domains span residues 283–422 (IRQA…AKGI) and 452–590 (IARD…VDKP). Residue Lys595 is the For Fru-6P isomerization activity of the active site.

In terms of assembly, homodimer.

It localises to the cytoplasm. It carries out the reaction D-fructose 6-phosphate + L-glutamine = D-glucosamine 6-phosphate + L-glutamate. Catalyzes the first step in hexosamine metabolism, converting fructose-6P into glucosamine-6P using glutamine as a nitrogen source. The protein is Glutamine--fructose-6-phosphate aminotransferase [isomerizing] of Halalkalibacterium halodurans (strain ATCC BAA-125 / DSM 18197 / FERM 7344 / JCM 9153 / C-125) (Bacillus halodurans).